The chain runs to 436 residues: Methylenetetrahydrofolate--tRNA-(uracil-5-)-methyltransferase TrmFO (436 aa).

Position 10–15 (G10–G15) interacts with FAD.

Belongs to the MnmG family. TrmFO subfamily. The cofactor is FAD.

The protein resides in the cytoplasm. The catalysed reaction is uridine(54) in tRNA + (6R)-5,10-methylene-5,6,7,8-tetrahydrofolate + NADH + H(+) = 5-methyluridine(54) in tRNA + (6S)-5,6,7,8-tetrahydrofolate + NAD(+). The enzyme catalyses uridine(54) in tRNA + (6R)-5,10-methylene-5,6,7,8-tetrahydrofolate + NADPH + H(+) = 5-methyluridine(54) in tRNA + (6S)-5,6,7,8-tetrahydrofolate + NADP(+). Catalyzes the folate-dependent formation of 5-methyl-uridine at position 54 (M-5-U54) in all tRNAs. The polypeptide is Methylenetetrahydrofolate--tRNA-(uracil-5-)-methyltransferase TrmFO (Exiguobacterium sp. (strain ATCC BAA-1283 / AT1b)).